Reading from the N-terminus, the 251-residue chain is tRNA (guanine-N(1)-)-methyltransferase (251 aa).

S-adenosyl-L-methionine is bound by residues Gly122 and 142–147 (IGDYVL). Positions 226–251 (RARRPDLFATRPQPNRQKPPKNTTDG) are disordered. Residues 237 to 251 (PQPNRQKPPKNTTDG) are compositionally biased toward polar residues.

The protein belongs to the RNA methyltransferase TrmD family. In terms of assembly, homodimer.

The protein resides in the cytoplasm. It catalyses the reaction guanosine(37) in tRNA + S-adenosyl-L-methionine = N(1)-methylguanosine(37) in tRNA + S-adenosyl-L-homocysteine + H(+). Functionally, specifically methylates guanosine-37 in various tRNAs. This Rhodopseudomonas palustris (strain BisB18) protein is tRNA (guanine-N(1)-)-methyltransferase.